Reading from the N-terminus, the 229-residue chain is Potassium/proton antiporter CemA (229 aa).

4 helical membrane passes run 7–27 (LASLPYLVSIIFLPWWVSLSF), 106–126 (IILHFSTNLICFAILSGYFFL), 154–174 (ILLVTDLWIGFHSTHGWELMI), and 189–209 (IISGLVSTFPVILDTIVKYWI).

Belongs to the CemA family.

The protein localises to the plastid. It localises to the chloroplast inner membrane. It catalyses the reaction K(+)(in) + H(+)(out) = K(+)(out) + H(+)(in). In terms of biological role, contributes to K(+)/H(+) antiport activity by supporting proton efflux to control proton extrusion and homeostasis in chloroplasts in a light-dependent manner to modulate photosynthesis. Prevents excessive induction of non-photochemical quenching (NPQ) under continuous-light conditions. Indirectly promotes efficient inorganic carbon uptake into chloroplasts. This Phalaenopsis aphrodite subsp. formosana (Moth orchid) protein is Potassium/proton antiporter CemA.